The chain runs to 192 residues: ER protein translocation subcomplex subunit sec67 (192 aa).

In terms of assembly, component of the heterotetrameric Sec62/63complex composed of sec62, sec63, sec66 and sec72. The Sec62/63 complex associates with the Sec61 complex to form the Sec complex.

The protein localises to the cytoplasm. It localises to the nucleus. Its function is as follows. Acts as a non-essential component of the Sec62/63 complex which is involved in SRP-independent post-translational translocation across the endoplasmic reticulum (ER) and functions together with the Sec61 complex and bip1 in a channel-forming translocon complex. A cycle of assembly and disassembly of Sec62/63 complex from sec61 may govern the activity of the translocon. sec72 may be involved in signal peptide recognition for a defined subset of leader peptides, or may increase the efficiency of unusual or 'difficult' secretory precursors to the translocation pore, it may be that this protein binds charged leader peptides to the membrane until they engage the translocation apparatus. In Schizosaccharomyces pombe (strain 972 / ATCC 24843) (Fission yeast), this protein is ER protein translocation subcomplex subunit sec67 (sec67).